A 223-amino-acid polypeptide reads, in one-letter code: Small ribosomal subunit protein uS3 (223 aa).

A KH type-2 domain is found at 40–108 (IRELVHRELP…KVHLNIQEIR (69 aa)).

Belongs to the universal ribosomal protein uS3 family. As to quaternary structure, part of the 30S ribosomal subunit. Forms a tight complex with proteins S10 and S14.

In terms of biological role, binds the lower part of the 30S subunit head. Binds mRNA in the 70S ribosome, positioning it for translation. This is Small ribosomal subunit protein uS3 from Thermomicrobium roseum (strain ATCC 27502 / DSM 5159 / P-2).